The chain runs to 176 residues: Small ribosomal subunit protein uS5 (176 aa).

In terms of domain architecture, S5 DRBM spans 11–74 (LSEVLVDVNR…QAAKKRMMKV (64 aa)).

Belongs to the universal ribosomal protein uS5 family. Part of the 30S ribosomal subunit. Contacts proteins S4 and S8.

With S4 and S12 plays an important role in translational accuracy. In terms of biological role, located at the back of the 30S subunit body where it stabilizes the conformation of the head with respect to the body. This Rickettsia akari (strain Hartford) protein is Small ribosomal subunit protein uS5.